The chain runs to 318 residues: Methionyl-tRNA formyltransferase (318 aa).

110–113 (SLLP) provides a ligand contact to (6S)-5,6,7,8-tetrahydrofolate.

This sequence belongs to the Fmt family.

The catalysed reaction is L-methionyl-tRNA(fMet) + (6R)-10-formyltetrahydrofolate = N-formyl-L-methionyl-tRNA(fMet) + (6S)-5,6,7,8-tetrahydrofolate + H(+). Attaches a formyl group to the free amino group of methionyl-tRNA(fMet). The formyl group appears to play a dual role in the initiator identity of N-formylmethionyl-tRNA by promoting its recognition by IF2 and preventing the misappropriation of this tRNA by the elongation apparatus. This chain is Methionyl-tRNA formyltransferase, found in Ligilactobacillus salivarius (strain UCC118) (Lactobacillus salivarius).